The primary structure comprises 314 residues: Serine/threonine-protein phosphatase PP-Y (314 aa).

Residues Asp-60, His-62, Asp-88, and Asn-120 each coordinate Mn(2+). Catalysis depends on His-121, which acts as the Proton donor. Mn(2+) is bound by residues His-169 and His-244.

It belongs to the PPP phosphatase family. PP-Y subfamily. Mn(2+) serves as cofactor.

It carries out the reaction O-phospho-L-seryl-[protein] + H2O = L-seryl-[protein] + phosphate. The catalysed reaction is O-phospho-L-threonyl-[protein] + H2O = L-threonyl-[protein] + phosphate. The chain is Serine/threonine-protein phosphatase PP-Y (PpY-55A) from Drosophila melanogaster (Fruit fly).